The chain runs to 189 residues: Lipid A acyltransferase PagP (189 aa).

A signal peptide spans 1 to 23; the sequence is MKLKSVLYLLMLLNCLGLKSAHA. Catalysis depends on residues His61, Asp104, and Ser105.

Belongs to the lipid A palmitoyltransferase family. In terms of assembly, homodimer.

Its subcellular location is the cell outer membrane. It catalyses the reaction a lipid A + a 1,2-diacyl-sn-glycero-3-phosphocholine = a hepta-acyl lipid A + a 2-acyl-sn-glycero-3-phosphocholine. It carries out the reaction a lipid IVA + a 1,2-diacyl-sn-glycero-3-phosphocholine = a lipid IVB + a 2-acyl-sn-glycero-3-phosphocholine. The catalysed reaction is a lipid IIA + a 1,2-diacyl-sn-glycero-3-phosphocholine = a lipid IIB + a 2-acyl-sn-glycero-3-phosphocholine. Functionally, transfers a fatty acid residue from the sn-1 position of a phospholipid to the N-linked hydroxyfatty acid chain on the proximal unit of lipid A or its precursors. The polypeptide is Lipid A acyltransferase PagP (Erwinia amylovora (strain ATCC 49946 / CCPPB 0273 / Ea273 / 27-3)).